The sequence spans 346 residues: Peroxidase 19 (346 aa).

The signal sequence occupies residues 1–31; it reads MHVISLSLSSIFFFLFLTSTILISPVQPTTS. Intrachain disulfides connect C51/C134, C84/C89, C140/C342, and C219/C251. Catalysis depends on H82, which acts as the Proton acceptor. Ca(2+) is bound by residues D83, V86, G88, D90, and S92. P182 contacts substrate. An N-linked (GlcNAc...) asparagine glycan is attached at N185. H212 contributes to the heme b binding site. Residue T213 participates in Ca(2+) binding. Positions 265, 268, and 273 each coordinate Ca(2+).

The protein belongs to the peroxidase family. Classical plant (class III) peroxidase subfamily. It depends on heme b as a cofactor. Ca(2+) is required as a cofactor.

It is found in the secreted. The enzyme catalyses 2 a phenolic donor + H2O2 = 2 a phenolic radical donor + 2 H2O. Functionally, removal of H(2)O(2), oxidation of toxic reductants, biosynthesis and degradation of lignin, suberization, auxin catabolism, response to environmental stresses such as wounding, pathogen attack and oxidative stress. These functions might be dependent on each isozyme/isoform in each plant tissue. This Arabidopsis thaliana (Mouse-ear cress) protein is Peroxidase 19 (PER19).